Here is a 110-residue protein sequence, read N- to C-terminus: U1-lycotoxin-Ls1kk (110 aa).

Positions 1–20 (MKFVLLFGVLLVTLFSYSSA) are cleaved as a signal peptide. A propeptide spanning residues 21-44 (EMFDDFDQADEDELLSLIEKEEAR) is cleaved from the precursor. Intrachain disulfides connect cysteine 47–cysteine 62, cysteine 54–cysteine 71, cysteine 61–cysteine 89, and cysteine 73–cysteine 87.

This sequence belongs to the neurotoxin 19 (CSTX) family. 03 subfamily. Expressed by the venom gland.

It localises to the secreted. In Lycosa singoriensis (Wolf spider), this protein is U1-lycotoxin-Ls1kk.